We begin with the raw amino-acid sequence, 444 residues long: MEFPDIHAYNSTKYLEDGDTTILGDTIQFQFIYENIDNKEHISLPKIKIFKYFRDKISFETLDRIIKNDYINPSYFQLKDKKFCAHNRDFYHLSTGGYGIIFRMEKYVVKFVFEDGSKKYKPMEVTSEFTIPRFLYNNLKGDERKFIVCAIAMGINFKIDFLRTIYYNTMSLMSALFNIMEGEPLENKYSHRKVLRYFAKYKQSNDFVKLISQFYPYVVNSNINVINNFNYLINFFERSRRSNGYFNRGNIIIFPLAKCSAEKITPDNYAQYGFSSIVEYTKFMFLQIALLYIKIYELPCSNFVHLDLKPDNILIFDSKEPINIYVGDMHYVFKEPIRCTLNDFDFSQISEIIPNKKAVTAINKEQNWYYDFHFFSHVLFKVYPEISKDEDFTSLLNEFTICDKYICENFRLQVNKLPSISFLINIVSRDIFSKWIDGKSTSHQ.

Residues 87–444 enclose the Protein kinase domain; the sequence is NRDFYHLSTG…WIDGKSTSHQ (358 aa). Residues 93-101 and lysine 118 each bind ATP; that span reads LSTGGYGII. Residue aspartate 307 is the Proton acceptor of the active site.

This sequence belongs to the protein kinase superfamily. Ser/Thr protein kinase family. Poxviruses subfamily. Phosphorylated in vivo. Autophosphorylated in vitro.

Its subcellular location is the host endoplasmic reticulum. It is found in the host endoplasmic reticulum-Golgi intermediate compartment. It catalyses the reaction L-seryl-[protein] + ATP = O-phospho-L-seryl-[protein] + ADP + H(+). The catalysed reaction is L-threonyl-[protein] + ATP = O-phospho-L-threonyl-[protein] + ADP + H(+). In terms of biological role, essential serine-protein kinase involved in the early stage of virion morphogenesis. The protein is Serine/threonine-protein kinase 2 (OPG054) of Vertebrata (FPV).